The sequence spans 53 residues: uncharacterized protein (53 aa).

This is an uncharacterized protein from Archaeoglobus fulgidus (strain ATCC 49558 / DSM 4304 / JCM 9628 / NBRC 100126 / VC-16).